We begin with the raw amino-acid sequence, 148 residues long: D-aminoacyl-tRNA deacylase (148 aa).

The Gly-cisPro motif, important for rejection of L-amino acids signature appears at 137–138 (GP).

Belongs to the DTD family. Homodimer.

The protein localises to the cytoplasm. It carries out the reaction glycyl-tRNA(Ala) + H2O = tRNA(Ala) + glycine + H(+). The catalysed reaction is a D-aminoacyl-tRNA + H2O = a tRNA + a D-alpha-amino acid + H(+). An aminoacyl-tRNA editing enzyme that deacylates mischarged D-aminoacyl-tRNAs. Also deacylates mischarged glycyl-tRNA(Ala), protecting cells against glycine mischarging by AlaRS. Acts via tRNA-based rather than protein-based catalysis; rejects L-amino acids rather than detecting D-amino acids in the active site. By recycling D-aminoacyl-tRNA to D-amino acids and free tRNA molecules, this enzyme counteracts the toxicity associated with the formation of D-aminoacyl-tRNA entities in vivo and helps enforce protein L-homochirality. This is D-aminoacyl-tRNA deacylase from Enterococcus faecalis (strain ATCC 700802 / V583).